Consider the following 185-residue polypeptide: dTTP/UTP pyrophosphatase (185 aa).

The active-site Proton acceptor is the aspartate 64.

The protein belongs to the Maf family. YhdE subfamily. A divalent metal cation is required as a cofactor.

Its subcellular location is the cytoplasm. The enzyme catalyses dTTP + H2O = dTMP + diphosphate + H(+). It catalyses the reaction UTP + H2O = UMP + diphosphate + H(+). Functionally, nucleoside triphosphate pyrophosphatase that hydrolyzes dTTP and UTP. May have a dual role in cell division arrest and in preventing the incorporation of modified nucleotides into cellular nucleic acids. The sequence is that of dTTP/UTP pyrophosphatase from Leptospira borgpetersenii serovar Hardjo-bovis (strain JB197).